Reading from the N-terminus, the 798-residue chain is Tripartite terminase subunit 1 (798 aa).

The C3H1-type zinc finger occupies 191-219 (CFQCYEELMAVPNQGRSINRRMQGLLCDH). Positions 416 to 429 (AAGAARSRAEAASG) are enriched in low complexity. The segment at 416–458 (AAGAARSRAEAASGAGAGGEEGAGAAAGRGNTGGDEGAGTTTA) is disordered. The span at 430 to 452 (AGAGGEEGAGAAAGRGNTGGDEG) shows a compositional bias: gly residues. Position 674–681 (674–681 (YNETFGKQ)) interacts with ATP.

This sequence belongs to the herpesviridae TRM1 protein family. As to quaternary structure, associates with TRM2 and TRM3 to form the tripartite terminase complex. Interacts with portal protein.

The protein resides in the host nucleus. Functionally, component of the molecular motor that translocates viral genomic DNA in empty capsid during DNA packaging. Forms a tripartite terminase complex together with TRM2 and TRM3 in the host cytoplasm. Once the complex reaches the host nucleus, it interacts with the capsid portal vertex. This portal forms a ring in which genomic DNA is translocated into the capsid. TRM1 carries an endonuclease activity that plays an important role for the cleavage of concatemeric viral DNA into unit length genomes. This chain is Tripartite terminase subunit 1, found in Murid herpesvirus 1 (strain Smith) (MuHV-1).